Here is a 440-residue protein sequence, read N- to C-terminus: D-serine dehydratase (440 aa).

Residue Lys-116 is modified to N6-(pyridoxal phosphate)lysine.

It belongs to the serine/threonine dehydratase family. DsdA subfamily. In terms of assembly, monomer. The cofactor is pyridoxal 5'-phosphate.

The enzyme catalyses D-serine = pyruvate + NH4(+). The sequence is that of D-serine dehydratase from Salmonella paratyphi A (strain ATCC 9150 / SARB42).